Reading from the N-terminus, the 200-residue chain is Peptidyl-tRNA hydrolase (200 aa).

Residue Tyr16 participates in tRNA binding. Catalysis depends on His21, which acts as the Proton acceptor. Positions 67, 69, and 115 each coordinate tRNA.

This sequence belongs to the PTH family. Monomer.

The protein resides in the cytoplasm. It catalyses the reaction an N-acyl-L-alpha-aminoacyl-tRNA + H2O = an N-acyl-L-amino acid + a tRNA + H(+). Its function is as follows. Hydrolyzes ribosome-free peptidyl-tRNAs (with 1 or more amino acids incorporated), which drop off the ribosome during protein synthesis, or as a result of ribosome stalling. Functionally, catalyzes the release of premature peptidyl moieties from peptidyl-tRNA molecules trapped in stalled 50S ribosomal subunits, and thus maintains levels of free tRNAs and 50S ribosomes. The protein is Peptidyl-tRNA hydrolase of Prochlorococcus marinus (strain AS9601).